Consider the following 183-residue polypeptide: Apo-citrate lyase phosphoribosyl-dephospho-CoA transferase (183 aa).

It belongs to the CitX family.

The enzyme catalyses apo-[citrate lyase ACP] + 2'-(5''-triphospho-alpha-D-ribosyl)-3'-dephospho-CoA = holo-[citrate lyase ACP] + diphosphate. Its function is as follows. Transfers 2-(5''-triphosphoribosyl)-3'-dephosphocoenzyme-A on a serine residue to the apo-acyl carrier protein (gamma chain) of the citrate lyase to yield holo-acyl carrier protein. The sequence is that of Apo-citrate lyase phosphoribosyl-dephospho-CoA transferase from Escherichia coli O9:H4 (strain HS).